The following is a 272-amino-acid chain: Cytosolic Fe-S cluster assembly factor NUBP2 (272 aa).

23–30 (GKGGVGKS) provides a ligand contact to ATP. C197 and C200 together coordinate [4Fe-4S] cluster.

Belongs to the Mrp/NBP35 ATP-binding proteins family. NUBP2/CFD1 subfamily. As to quaternary structure, heterotetramer of 2 NUBP1 and 2 NUBP2 chains. [4Fe-4S] cluster is required as a cofactor.

Its subcellular location is the cytoplasm. Functionally, component of the cytosolic iron-sulfur (Fe/S) protein assembly (CIA) machinery. Required for maturation of extramitochondrial Fe-S proteins. The NUBP1-NUBP2 heterotetramer forms a Fe-S scaffold complex, mediating the de novo assembly of an Fe-S cluster and its transfer to target apoproteins. This is Cytosolic Fe-S cluster assembly factor NUBP2 from Gallus gallus (Chicken).